Reading from the N-terminus, the 1277-residue chain is DNA repair protein RAD5B (1277 aa).

Positions 271-293 are disordered; the sequence is KLEQENDDLFSSGDSDGTSAKRR. Residues 674-871 form the Helicase ATP-binding domain; sequence PTATQMARGG…YSLLCFLHVE (198 aa). Residue 687 to 694 participates in ATP binding; the sequence is DAMGLGKT. Positions 822–825 match the DEAH box motif; that stretch reads DEAH. The segment at 1040–1080 adopts an RING-type zinc-finger fold; the sequence is CPICLESADDPVLTPCAHRMCRECLLTSWRSPSCGLCPICR. In terms of domain architecture, Helicase C-terminal spans 1113-1277; that stretch reads ELLKCLEKIK…RLEELKMLFR (165 aa).

Belongs to the SNF2/RAD54 helicase family. RAD16 subfamily.

It is found in the nucleus. Its function is as follows. Possesses intrinsic ATP-dependent nucleosome-remodeling activity. This activity may be required for DNA repair. Does not seem to be required for DNA repair and regulation of homologous recombination (HR). The protein is DNA repair protein RAD5B of Arabidopsis thaliana (Mouse-ear cress).